The chain runs to 160 residues: Protein cornichon homolog 2 (160 aa).

Over 1-10 (MAFTFAAFCY) the chain is Cytoplasmic. The chain crosses the membrane as a helical span at residues 11 to 31 (MLTLVLCAALIFFVIWQIIAF). The Lumenal portion of the chain corresponds to 32-72 (DELRTDFKNPIDQSNPTRARERILNIERICNLLRRLVVPEY). Residues 73–93 (SIHGLFCLMFMCAGEWVTLGL) form a helical membrane-spanning segment. At 94-138 (NIPLLLYHLWRFFHRPADGSEVMYDPVSVMNADILNYCQKESWCK) the chain is on the cytoplasmic side. Residues 139-159 (LGFYLLSFFYYLYSMVYALVS) traverse the membrane as a helical segment. A topological domain (lumenal) is located at residue Phe-160.

This sequence belongs to the cornichon family.

It is found in the membrane. Functionally, regulates the trafficking and gating properties of AMPA-selective glutamate receptors (AMPARs). This is Protein cornichon homolog 2 (cnih2) from Danio rerio (Zebrafish).